We begin with the raw amino-acid sequence, 211 residues long: N-(5'-phosphoribosyl)anthranilate isomerase (211 aa).

It belongs to the TrpF family.

It carries out the reaction N-(5-phospho-beta-D-ribosyl)anthranilate = 1-(2-carboxyphenylamino)-1-deoxy-D-ribulose 5-phosphate. It functions in the pathway amino-acid biosynthesis; L-tryptophan biosynthesis; L-tryptophan from chorismate: step 3/5. The protein is N-(5'-phosphoribosyl)anthranilate isomerase of Chromohalobacter salexigens (strain ATCC BAA-138 / DSM 3043 / CIP 106854 / NCIMB 13768 / 1H11).